We begin with the raw amino-acid sequence, 31 residues long: Cytochrome b6-f complex subunit 6 (31 aa).

The chain crosses the membrane as a helical span at residues 4–24 (ITSYFGFLLAALTITSALLIG).

It belongs to the PetL family. As to quaternary structure, the 4 large subunits of the cytochrome b6-f complex are cytochrome b6, subunit IV (17 kDa polypeptide, PetD), cytochrome f and the Rieske protein, while the 4 small subunits are PetG, PetL, PetM and PetN. The complex functions as a dimer.

The protein resides in the plastid. The protein localises to the chloroplast thylakoid membrane. Component of the cytochrome b6-f complex, which mediates electron transfer between photosystem II (PSII) and photosystem I (PSI), cyclic electron flow around PSI, and state transitions. PetL is important for photoautotrophic growth as well as for electron transfer efficiency and stability of the cytochrome b6-f complex. This is Cytochrome b6-f complex subunit 6 from Piper cenocladum (Ant piper).